Here is a 1387-residue protein sequence, read N- to C-terminus: Kinesin-like protein KIF15-B (1387 aa).

In terms of domain architecture, Kinesin motor spans 26 to 364 (AIKVFVRIRP…LQFAQRAKLI (339 aa)). 110–117 (GQTGSGKT) contributes to the ATP binding site. The stretch at 369 to 1383 (VVNEDTQGNV…NLFLKETKKC (1015 aa)) forms a coiled coil. Positions 1138 to 1387 (NSPVVLAQTP…KETKKCEHCD (250 aa)) are necessary for its targeting to microtubule minus ends.

The protein belongs to the TRAFAC class myosin-kinesin ATPase superfamily. Kinesin family. KLP2 subfamily. As to quaternary structure, homodimer. Dimerization is required for targeting to microtubule minus ends. Found in a complex with tpx2 and microtubules. Its association with microtubules and targeting to microtubule minus ends requires tpx2. In terms of tissue distribution, strongly expressed in testis and weakly in lung (at protein level).

The protein resides in the cytoplasm. Its subcellular location is the cytoskeleton. It localises to the microtubule organizing center. The protein localises to the centrosome. It is found in the spindle. The protein resides in the spindle pole. In terms of biological role, plus-end directed kinesin-like motor enzyme involved in mitotic spindle assembly. Required for centrosome separation and maintenance of spindle bipolarity during mitosis. This chain is Kinesin-like protein KIF15-B (kif15-b), found in Xenopus laevis (African clawed frog).